The primary structure comprises 264 residues: Ribosomal RNA small subunit methyltransferase A (264 aa).

S-adenosyl-L-methionine-binding residues include Asn-12, Leu-14, Gly-39, Glu-60, Asp-83, and Asn-103.

The protein belongs to the class I-like SAM-binding methyltransferase superfamily. rRNA adenine N(6)-methyltransferase family. RsmA subfamily.

It is found in the cytoplasm. The catalysed reaction is adenosine(1518)/adenosine(1519) in 16S rRNA + 4 S-adenosyl-L-methionine = N(6)-dimethyladenosine(1518)/N(6)-dimethyladenosine(1519) in 16S rRNA + 4 S-adenosyl-L-homocysteine + 4 H(+). Its function is as follows. Specifically dimethylates two adjacent adenosines (A1518 and A1519) in the loop of a conserved hairpin near the 3'-end of 16S rRNA in the 30S particle. May play a critical role in biogenesis of 30S subunits. The protein is Ribosomal RNA small subunit methyltransferase A of Syntrophotalea carbinolica (strain DSM 2380 / NBRC 103641 / GraBd1) (Pelobacter carbinolicus).